Here is a 557-residue protein sequence, read N- to C-terminus: Iron-sulfur cluster assembly SufBD family protein ABCI8, chloroplastic (557 aa).

The segment at 1 to 47 is disordered; that stretch reads MASLLANGISSFSPQPTSDSSKSPKGFHPKPESLKFPSPKSLNPTRP. The transit peptide at 1 to 52 directs the protein to the chloroplast; it reads MASLLANGISSFSPQPTSDSSKSPKGFHPKPESLKFPSPKSLNPTRPIFKLR. Low complexity predominate over residues 10–24; it reads SSFSPQPTSDSSKSP.

Belongs to the iron-sulfur cluster assembly SufBD family.

The protein localises to the plastid. Its subcellular location is the chloroplast. Its function is as follows. Involved in light signaling, probably by mediating the transport and correct distribution of protoporphyrin IX, a chlorophyll precursor, in response to far-red light. The protein is Iron-sulfur cluster assembly SufBD family protein ABCI8, chloroplastic (ABCI8) of Arabidopsis thaliana (Mouse-ear cress).